We begin with the raw amino-acid sequence, 467 residues long: Asparagine--tRNA ligase (467 aa).

The protein belongs to the class-II aminoacyl-tRNA synthetase family. In terms of assembly, homodimer.

Its subcellular location is the cytoplasm. The catalysed reaction is tRNA(Asn) + L-asparagine + ATP = L-asparaginyl-tRNA(Asn) + AMP + diphosphate + H(+). In Pasteurella multocida (strain Pm70), this protein is Asparagine--tRNA ligase.